We begin with the raw amino-acid sequence, 203 residues long: SCO2-like protein RT0576 (203 aa).

Residues 42-203 (KDNIKIGEAF…KEIMEFLRNE (162 aa)) enclose the Thioredoxin domain. Cu cation-binding residues include Cys80, Cys84, and His170.

Belongs to the SCO1/2 family.

This chain is SCO2-like protein RT0576, found in Rickettsia typhi (strain ATCC VR-144 / Wilmington).